The following is a 214-amino-acid chain: MMLDPINHHFQAHEEAYYSRFFNEQRGLHMIKVLPGGVYVSGQEELICTGLGSCVSACIWDPVKRVGGMNHFLLPFHNHFEEKHWHADELLSGASRYGSYAMEMLLNQLLSLGARRERLRMKLFGGAQMMGFHSMIGEKNVEFVLHYAEQEGLEVVAYDLGGLEPRKIMFDPLTGKAWLKRIPFAEINRLRREEERYAHTLEKQTDKGSEVELF.

The protein belongs to the CheD family.

The enzyme catalyses L-glutaminyl-[protein] + H2O = L-glutamyl-[protein] + NH4(+). Functionally, probably deamidates glutamine residues to glutamate on methyl-accepting chemotaxis receptors (MCPs), playing an important role in chemotaxis. The polypeptide is Probable chemoreceptor glutamine deamidase CheD (Vibrio vulnificus (strain YJ016)).